The sequence spans 158 residues: NADH-quinone oxidoreductase subunit B (158 aa).

Residues Cys37, Cys38, Cys102, and Cys132 each coordinate [4Fe-4S] cluster.

Belongs to the complex I 20 kDa subunit family. In terms of assembly, NDH-1 is composed of 14 different subunits. Subunits NuoB, C, D, E, F, and G constitute the peripheral sector of the complex. Requires [4Fe-4S] cluster as cofactor.

It localises to the cell inner membrane. It catalyses the reaction a quinone + NADH + 5 H(+)(in) = a quinol + NAD(+) + 4 H(+)(out). NDH-1 shuttles electrons from NADH, via FMN and iron-sulfur (Fe-S) centers, to quinones in the respiratory chain. Couples the redox reaction to proton translocation (for every two electrons transferred, four hydrogen ions are translocated across the cytoplasmic membrane), and thus conserves the redox energy in a proton gradient. The sequence is that of NADH-quinone oxidoreductase subunit B from Bordetella parapertussis (strain 12822 / ATCC BAA-587 / NCTC 13253).